We begin with the raw amino-acid sequence, 206 residues long: Ribosomal RNA large subunit methyltransferase E (206 aa).

Positions 63, 65, 83, 99, and 124 each coordinate S-adenosyl-L-methionine. The active-site Proton acceptor is the Lys-164.

It belongs to the class I-like SAM-binding methyltransferase superfamily. RNA methyltransferase RlmE family.

It localises to the cytoplasm. It carries out the reaction uridine(2552) in 23S rRNA + S-adenosyl-L-methionine = 2'-O-methyluridine(2552) in 23S rRNA + S-adenosyl-L-homocysteine + H(+). Specifically methylates the uridine in position 2552 of 23S rRNA at the 2'-O position of the ribose in the fully assembled 50S ribosomal subunit. The polypeptide is Ribosomal RNA large subunit methyltransferase E (Buchnera aphidicola subsp. Schizaphis graminum (strain Sg)).